The sequence spans 85 residues: Large ribosomal subunit protein bL27 (85 aa).

It belongs to the bacterial ribosomal protein bL27 family.

The polypeptide is Large ribosomal subunit protein bL27 (Campylobacter concisus (strain 13826)).